Consider the following 143-residue polypeptide: Submaxillary gland androgen-regulated protein 2, isoform gamma (143 aa).

An N-terminal signal peptide occupies residues 1-22; it reads MKALYMVFVLWVLIGCFLSSEC. Residues 28–50 are disordered; that stretch reads GQHDPTRPLSPSNPSSHFYPQPD. Over residues 36 to 45 the composition is skewed to polar residues; the sequence is LSPSNPSSHF.

The protein resides in the secreted. May play a role in protection or detoxification. In Mus musculus (Mouse), this protein is Submaxillary gland androgen-regulated protein 2, isoform gamma (Smr2).